The sequence spans 216 residues: Elongation factor 1-beta (216 aa).

The tract at residues 71 to 131 is disordered; the sequence is GQASGVSASS…AKKKESGKSS (61 aa). Residues 73-89 are compositionally biased toward low complexity; the sequence is ASGVSASSAPAAAAPAA. Residues 92–107 are compositionally biased toward acidic residues; that stretch reads DEDDDDDMDLFGDETE. Basic and acidic residues predominate over residues 108–128; it reads EDKKAAAEREAAKPAKKKESG.

Belongs to the EF-1-beta/EF-1-delta family. In terms of assembly, EF-1 is composed of 4 subunits: alpha, beta (1B-alpha=beta'), delta (1B-beta), and gamma (1B-gamma).

EF-1-beta and EF-1-beta' stimulate the exchange of GDP bound to EF-1-alpha to GTP. In Triticum aestivum (Wheat), this protein is Elongation factor 1-beta.